The following is a 335-amino-acid chain: Zinc transporter ZIP11 (335 aa).

Helical transmembrane passes span 12-32, 44-64, 72-92, 187-207, 256-278, 283-300, and 315-335; these read LLGTFFTWAMTAAGAALVFIF, LGFAAGVMLAASYWSLLAPAV, GFGAFAFFPVAVGFTLGAAFV, IALLILAITIHNIPEGLAVGV, FWYGQLSGMVEPLAGVFGAFAVV, VLPYALAFAAGAMVYVVM, and LASWASILGFVVMMSLDVGLG.

This sequence belongs to the ZIP transporter (TC 2.A.5) family.

The protein localises to the cell membrane. Its subcellular location is the nucleus. It is found in the cytoplasm. The protein resides in the golgi apparatus. The enzyme catalyses Zn(2+)(in) = Zn(2+)(out). It carries out the reaction Cu(2+)(in) = Cu(2+)(out). In terms of biological role, zinc importer that regulates cytosolic zinc concentrations either via zinc influx from the extracellular compartment or efflux from intracellular organelles such as Golgi apparatus. May transport copper ions as well. The transport mechanism remains to be elucidated. This Rattus norvegicus (Rat) protein is Zinc transporter ZIP11 (Slc39a11).